The following is a 106-amino-acid chain: Thiosulfate sulfurtransferase GlpE (106 aa).

The Rhodanese domain maps to 16-104 (REQGAVLVDV…WRTTYPQETV (89 aa)). Cys64 serves as the catalytic Cysteine persulfide intermediate.

This sequence belongs to the GlpE family.

It is found in the cytoplasm. The catalysed reaction is thiosulfate + hydrogen cyanide = thiocyanate + sulfite + 2 H(+). It carries out the reaction thiosulfate + [thioredoxin]-dithiol = [thioredoxin]-disulfide + hydrogen sulfide + sulfite + 2 H(+). In terms of biological role, transferase that catalyzes the transfer of sulfur from thiosulfate to thiophilic acceptors such as cyanide or dithiols. May function in a CysM-independent thiosulfate assimilation pathway by catalyzing the conversion of thiosulfate to sulfite, which can then be used for L-cysteine biosynthesis. The chain is Thiosulfate sulfurtransferase GlpE from Pseudomonas syringae pv. syringae (strain B728a).